Reading from the N-terminus, the 121-residue chain is Flagellar protein FliT (121 aa).

A required for homodimerization region spans residues 1–50; it reads MNNAPHLYFAWQQLVEKSQLMLRLATEEQWDELITSEMAYVNAVQEIAHL. Residues 60–98 are fliD binding; it reads MQEQLRPMLRLILDNESKVKQLLQIRMDELAKLVGQSSV.

It belongs to the FliT family. As to quaternary structure, homodimer. Interacts with FliD and FlhC.

It is found in the cytoplasm. The protein localises to the cytosol. Its function is as follows. Dual-function protein that regulates the transcription of class 2 flagellar operons and that also acts as an export chaperone for the filament-capping protein FliD. As a transcriptional regulator, acts as an anti-FlhDC factor; it directly binds FlhC, thus inhibiting the binding of the FlhC/FlhD complex to class 2 promoters, resulting in decreased expression of class 2 flagellar operons. As a chaperone, effects FliD transition to the membrane by preventing its premature polymerization, and by directing it to the export apparatus. This is Flagellar protein FliT from Escherichia coli (strain 55989 / EAEC).